We begin with the raw amino-acid sequence, 546 residues long: CTP synthase (546 aa).

An amidoligase domain region spans residues Met-1 to Ile-269. A CTP-binding site is contributed by Ser-17. Ser-17 contributes to the UTP binding site. Residues Ser-18–Leu-23 and Asp-75 contribute to the ATP site. The Mg(2+) site is built by Asp-75 and Glu-143. CTP contacts are provided by residues Asp-150–Glu-152, Lys-190–Gln-195, and Lys-226. Residues Lys-190–Gln-195 and Lys-226 each bind UTP. Residues Arg-295–Ala-537 form the Glutamine amidotransferase type-1 domain. Gly-357 is a binding site for L-glutamine. Cys-384 functions as the Nucleophile; for glutamine hydrolysis in the catalytic mechanism. L-glutamine-binding positions include Leu-385–Gln-388, Glu-408, and Arg-465. Catalysis depends on residues His-510 and Glu-512.

The protein belongs to the CTP synthase family. As to quaternary structure, homotetramer.

It carries out the reaction UTP + L-glutamine + ATP + H2O = CTP + L-glutamate + ADP + phosphate + 2 H(+). The catalysed reaction is L-glutamine + H2O = L-glutamate + NH4(+). It catalyses the reaction UTP + NH4(+) + ATP = CTP + ADP + phosphate + 2 H(+). It functions in the pathway pyrimidine metabolism; CTP biosynthesis via de novo pathway; CTP from UDP: step 2/2. With respect to regulation, allosterically activated by GTP, when glutamine is the substrate; GTP has no effect on the reaction when ammonia is the substrate. The allosteric effector GTP functions by stabilizing the protein conformation that binds the tetrahedral intermediate(s) formed during glutamine hydrolysis. Inhibited by the product CTP, via allosteric rather than competitive inhibition. Functionally, catalyzes the ATP-dependent amination of UTP to CTP with either L-glutamine or ammonia as the source of nitrogen. Regulates intracellular CTP levels through interactions with the four ribonucleotide triphosphates. The sequence is that of CTP synthase from Myxococcus xanthus (strain DK1622).